We begin with the raw amino-acid sequence, 185 residues long: UPF0301 protein Tbd_2579 (185 aa).

Belongs to the UPF0301 (AlgH) family.

In Thiobacillus denitrificans (strain ATCC 25259 / T1), this protein is UPF0301 protein Tbd_2579.